Reading from the N-terminus, the 92-residue chain is Exodeoxyribonuclease 7 small subunit (92 aa).

The tract at residues 1 to 22 (MPKKNAISESTNSTPETAPAMT) is disordered. A compositionally biased stretch (polar residues) spans 7 to 16 (ISESTNSTPE).

Belongs to the XseB family. As to quaternary structure, heterooligomer composed of large and small subunits.

It localises to the cytoplasm. It catalyses the reaction Exonucleolytic cleavage in either 5'- to 3'- or 3'- to 5'-direction to yield nucleoside 5'-phosphates.. Bidirectionally degrades single-stranded DNA into large acid-insoluble oligonucleotides, which are then degraded further into small acid-soluble oligonucleotides. The polypeptide is Exodeoxyribonuclease 7 small subunit (Photorhabdus laumondii subsp. laumondii (strain DSM 15139 / CIP 105565 / TT01) (Photorhabdus luminescens subsp. laumondii)).